We begin with the raw amino-acid sequence, 574 residues long: G protein-coupled receptor kinase 4 (574 aa).

Methionine 1 carries the N-acetylmethionine modification. Positions 1-153 are N-terminal; sequence MELENFVANN…ECAGIVCKYL (153 aa). In terms of domain architecture, RGS spans 51–171; it reads DFSSLCDKQP…QESTYFNRFL (121 aa). Positions 186 to 448 constitute a Protein kinase domain; that stretch reads FRQYRVLGKG…VSAVKQHPIF (263 aa). Residues 192–200 and lysine 215 each bind ATP; that span reads LGKGGFGEV. The Proton acceptor role is filled by aspartate 311. The region spanning 449–514 is the AGC-kinase C-terminal domain; that stretch reads KDINFSRLEA…GSVTIPWQNE (66 aa). Serine 484 is subject to Phosphoserine.

It belongs to the protein kinase superfamily. AGC Ser/Thr protein kinase family. GPRK subfamily. Interacts with DRD3. In terms of processing, palmitoylated.

The protein resides in the cytoplasm. It localises to the cell cortex. It carries out the reaction [G-protein-coupled receptor] + ATP = [G-protein-coupled receptor]-phosphate + ADP + H(+). With respect to regulation, inhibited by heparin. Functionally, specifically phosphorylates the activated forms of G protein-coupled receptors. This chain is G protein-coupled receptor kinase 4 (Grk4), found in Mus musculus (Mouse).